The following is a 290-amino-acid chain: Acetylglutamate kinase (290 aa).

Residues 60-61, Arg82, and Asn185 contribute to the substrate site; that span reads GG.

The protein belongs to the acetylglutamate kinase family. ArgB subfamily.

The protein resides in the cytoplasm. It catalyses the reaction N-acetyl-L-glutamate + ATP = N-acetyl-L-glutamyl 5-phosphate + ADP. Its pathway is amino-acid biosynthesis; L-arginine biosynthesis; N(2)-acetyl-L-ornithine from L-glutamate: step 2/4. In terms of biological role, catalyzes the ATP-dependent phosphorylation of N-acetyl-L-glutamate. This is Acetylglutamate kinase from Archaeoglobus fulgidus (strain ATCC 49558 / DSM 4304 / JCM 9628 / NBRC 100126 / VC-16).